We begin with the raw amino-acid sequence, 722 residues long: Zinc finger protein 600 (722 aa).

The segment at 162 to 184 adopts a C2H2-type 1; degenerate zinc-finger fold; that stretch reads FQCNESGKAFNCSSLLRKHQIPH. 9 consecutive C2H2-type zinc fingers follow at residues 190–212, 218–240, 246–268, 274–296, 302–324, 330–352, 358–380, 386–408, and 414–436; these read YKCD…CRCH, YKCN…RRLH, HKCN…KAIH, YKCN…RRIH, YKCE…KRIH, YKCK…KRIH, YKCN…HRLH, YKCK…TRIH, and YKCN…KSIH. The segment at 442-464 adopts a C2H2-type 11; degenerate zinc-finger fold; it reads YKYEECEKVFSCGSTLETHKIIH. 9 consecutive C2H2-type zinc fingers follow at residues 470–492, 498–520, 526–548, 554–576, 582–604, 610–632, 638–660, 666–688, and 694–716; these read YKCK…TRIH, YKCN…RRVH, YKCN…RRLH, YKCT…TRIH, YKCN…HRIH, YKCE…RRIH, YKCK…TGLH, and YKCN…QAVH.

Belongs to the krueppel C2H2-type zinc-finger protein family.

Its subcellular location is the nucleus. In terms of biological role, may be involved in transcriptional regulation. The polypeptide is Zinc finger protein 600 (ZNF600) (Homo sapiens (Human)).